Consider the following 155-residue polypeptide: Ribosomal RNA large subunit methyltransferase H (155 aa).

S-adenosyl-L-methionine-binding positions include leucine 72, glycine 103, and 122–127 (FGRMVW).

This sequence belongs to the RNA methyltransferase RlmH family. Homodimer.

The protein localises to the cytoplasm. The catalysed reaction is pseudouridine(1915) in 23S rRNA + S-adenosyl-L-methionine = N(3)-methylpseudouridine(1915) in 23S rRNA + S-adenosyl-L-homocysteine + H(+). In terms of biological role, specifically methylates the pseudouridine at position 1915 (m3Psi1915) in 23S rRNA. This is Ribosomal RNA large subunit methyltransferase H from Paracoccus denitrificans (strain Pd 1222).